A 229-amino-acid polypeptide reads, in one-letter code: Cytidylate kinase (229 aa).

12–20 (GPSGSGKGT) lines the ATP pocket.

It belongs to the cytidylate kinase family. Type 1 subfamily.

It localises to the cytoplasm. It carries out the reaction CMP + ATP = CDP + ADP. It catalyses the reaction dCMP + ATP = dCDP + ADP. The chain is Cytidylate kinase from Stutzerimonas stutzeri (strain A1501) (Pseudomonas stutzeri).